The chain runs to 927 residues: MDVPEPQPDPDGGDGPGHEPGGSPQDELDFSILFDYDYLNPIEEEPIAHKAISSPSGLAYPDDVLDYGLKPCNPLASLSGEPPGRFGEPDSIGFQNFLSPVKPAGASGPSPRIEITPSHELMQAGGALRGRDAGLSPEQPALALAGVAASPRFTLPVPGYEGYREPLCLSPASSGSSASFISDTFSPYTSPCVSPNNAGPDDLCPQFQNIPAHYSPRTSPIMSPRTSLAEDSCLGRHSPVPRPASRSSSPGAKRRHSCAEALVAPLPAASPQRSRSPSPQPSPHVALQDDSIPAGYPPTAGSAVLMDALNTLATDSPCGIPSKIWKTSPDPTPVSTAPSKAGLARHIYPTVEFLGPCEQEERRNSAPESILLVPPTWPKQLVPAIPICSIPVTASLPPLEWPLSNQSGSYELRIEVQPKPHHRAHYETEGSRGAVKAPTGGHPVVQLHGYMENKPLGLQIFIGTADERILKPHAFYQVHRITGKTVTTTSYEKIVGNTKVLEIPLEPKNNMRATIDCAGILKLRNADIELRKGETDIGRKNTRVRLVFRVHVPEPSGRIVSLQAASNPIECSQRSAHELPMVERQDMDSCLVYGGQQMILTGQNFTAESKVVFMEKTTDGQQIWEMEATVDKDKSQPNMLFVEIPEYRNKHIRVPVKVNFYVINGKRKRSQPQHFTYHPVPAIKTEPSDEYEPSLICSPAHGGLGSQPYYPQHPMLAESPSCLVATMAPCQQFRSGLSSPDARYQQQSPAAALYQRSKSLSPGLLGYQQPSLLAAPLGLADAHRSVLVHAGSQGQGQGSTLPHTSSASQQASPVIHYSPTNQQLRGGGHQEFQHIMYCENFGPSSARPGPPPINQGQRLSPGAYPTVIQQQTAPSQRAAKNGPSDQKEALPTGVTVKQEQNLDQTYLDDVNEIIRKEFSGPPSRNQT.

The segment at 1 to 29 (MDVPEPQPDPDGGDGPGHEPGGSPQDELD) is disordered. 7 positions are modified to phosphoserine: S23, S53, S54, S56, S99, S107, and S110. Residues 111 to 116 (PRIEIT) form a calcineurin-binding region. The transactivation domain A (TAD-A) stretch occupies residues 119–201 (HELMQAGGAL…CVSPNNAGPD (83 aa)). A phosphoserine mark is found at S136, S150, S170, S173, S174, S176, S177, S179, and S182. A required for cytoplasmic retention of the phosphorylated form region spans residues 163–177 (YREPLCLSPASSGSS). 2 repeat units span residues 186–202 (SPYT…GPDD) and 215–231 (SPRT…LAED). The 3 X approximate SP repeats stretch occupies residues 186 to 292 (SPYTSPCVSP…PHVALQDDSI (107 aa)). 2 disordered regions span residues 203-299 (LCPQ…YPPT) and 322-341 (SKIW…PSKA). A phosphoserine mark is found at S215, S219, S223, S238, and S245. Residues 216–226 (PRTSPIMSPRT) are compositionally biased toward polar residues. Positions 253-255 (KRR) match the Nuclear localization signal motif. Residues S257, S270, S276, S278, S282, S328, and S365 each carry the phosphoserine modification. The segment covering 267-277 (PAASPQRSRSP) has biased composition (low complexity). The stretch at 274–290 (SRSPSPQPSPHVALQDD) is one 3; approximate repeat. In terms of domain architecture, RHD spans 394 to 576 (ASLPPLEWPL…NPIECSQRSA (183 aa)). Residues 423–430 (RAHYETEG) mediate DNA binding. Phosphoserine is present on residues S757, S759, and S761. 2 disordered regions span residues 790-812 (AGSQ…QQAS) and 841-903 (FGPS…QNLD). Over residues 798–812 (GSTLPHTSSASQQAS) the composition is skewed to polar residues. S860 is modified (phosphoserine).

In terms of assembly, member of the multicomponent NFATC transcription complex that consists of at least two components, a pre-existing cytoplasmic component NFATC2 and an inducible nuclear component NFATC1. Other members such as NFATC4, NFATC3 or members of the activating protein-1 family, MAF, GATA4 and Cbp/p300 can also bind the complex. The phosphorylated form specifically interacts with XPO1; which mediates nuclear export. NFATC proteins bind to DNA as monomers. Interacts with NFATC2IP. Interacts with FOXP3. Interacts with TBX21 ('Thr-302' phosphorylated form). Interacts with KAT2A. Interacts with HOMER2 and HOMER3; this interaction competes with calcineurin/PPP3CA-binding and hence prevents NFATC2 dephosphorylation and activation. Interacts with protein phosphatase PPP3CA/calcineurin A. Interacts with AKAP5 (via leucine zipper domain); this is required for NFATC2/NFAT1 recruitment to CRAC channels. Post-translationally, in resting cells, phosphorylated by NFATC-kinase on at least 18 sites in the 99-365 region. Upon cell stimulation, all these sites except Ser-245 are dephosphorylated by calcineurin. Dephosphorylation induces a conformational change that simultaneously exposes an NLS and masks an NES, which results in nuclear localization. Simultaneously, one site among Ser-53; Ser-54 and Ser-56 is phosphorylated; which is required for full transcriptional activity. Ubiquitinated in endothelial cells by RNF213 downstream of the non-canonical Wnt signaling pathway, leading to its degradation by the proteasome. As to expression, expressed in spleen, heart, testis, brain, placenta, muscle and pancreas. Expressed in the thymus. Expressed in the lung. Expressed in cartilage.

It is found in the cytoplasm. Its subcellular location is the nucleus. Plays a role in the inducible expression of cytokine genes in T cells, especially in the induction of the IL-2, IL-3, IL-4, TNF-alpha or GM-CSF. Promotes invasive migration through the activation of GPC6 expression and WNT5A signaling pathway. Is involved in the negative regulation of chondrogenesis. Recruited by AKAP5 to ORAI1 pore-forming subunit of CRAC channels in Ca(2+) signaling microdomains where store-operated Ca(2+) influx is coupled to calmodulin and calcineurin signaling and activation of NFAT-dependent transcriptional responses. The chain is Nuclear factor of activated T-cells, cytoplasmic 2 (Nfatc2) from Mus musculus (Mouse).